Consider the following 252-residue polypeptide: NAC domain-containing protein 23 (252 aa).

The 166-residue stretch at 12 to 177 (MPPGFRFQPT…EMVLCRISNK (166 aa)) folds into the NAC domain. Residues 110–183 (TAVKRRFVFY…ISNKDLPKPP (74 aa)) mediate DNA binding. The disordered stretch occupies residues 225 to 252 (VDDAAAADDDPGDLDEEIDDSMQRNHGG). The segment covering 229–244 (AAADDDPGDLDEEIDD) has biased composition (acidic residues).

In terms of assembly, forms heterodimers with NAC26. In terms of tissue distribution, expressed in stems and panicles. Expressed in developing seeds.

Its subcellular location is the nucleus. It is found in the cytoplasm. Transcription factor involved in the regulation of seed size. Possesses transactivation activity in yeast. The protein is NAC domain-containing protein 23 of Oryza sativa subsp. indica (Rice).